A 505-amino-acid chain; its full sequence is MTAPKPVVLCILDGWGLDPDGPANAPLLADTPVMDRLMATCPNATLTTFGPDVGLPSGQMGNSEVGHTNIGAGRVVAMDLGQIDLAIEDGSFARNPALTGFIDRLKSSGGTAHLMGVASDGGVHGHTDHIIAAAKAVAGAGVPVVLHAITDGRDVAPKSADRFMPALEAALPEGARIGTVIGRYYAMDRDNRWDRVARAFVAMVRAQGETAESAQAAVAAAYGRGETDEFIAPTVIGGYAGMRDGDGIFCLNFRADRAREILRAMAQPDFDAFDPAGLPDFAAKLGMVSYSDEHDGWFDIVFPKREIVNTLGAWVAKQGLRQFRLAETEKYPHVTFFLNGGQETPETGEDRFMPDSPKVATYDLQPEMSAEEVSDSFVAAIEAGYDLIVVNYANPDMVGHTGDLEAAKAACTAVDTGLGRALAALEVAGGAMIVTADHGNCETMIDPETGGTHTAHTLNPVPVILVGGPEGATLAPGRLADLAPTILHLMHLPQPVEMTGRSLIR.

Residues Asp-13 and Ser-63 each contribute to the Mn(2+) site. Residue Ser-63 is the Phosphoserine intermediate of the active site. Residues His-124, 153–154 (RD), Arg-183, Arg-189, 254–257 (RADR), and Lys-330 each bind substrate. Residues Asp-396, His-400, Asp-437, His-438, and His-456 each contribute to the Mn(2+) site.

It belongs to the BPG-independent phosphoglycerate mutase family. As to quaternary structure, monomer. Requires Mn(2+) as cofactor.

It carries out the reaction (2R)-2-phosphoglycerate = (2R)-3-phosphoglycerate. Its pathway is carbohydrate degradation; glycolysis; pyruvate from D-glyceraldehyde 3-phosphate: step 3/5. Functionally, catalyzes the interconversion of 2-phosphoglycerate and 3-phosphoglycerate. The sequence is that of 2,3-bisphosphoglycerate-independent phosphoglycerate mutase from Dinoroseobacter shibae (strain DSM 16493 / NCIMB 14021 / DFL 12).